Here is a 586-residue protein sequence, read N- to C-terminus: Lamin-B1 (586 aa).

The disordered stretch occupies residues 1–31 (MATATPVPPRMGSRAGGPTTPLSPTRLSRLQ). Ala2 is subject to N-acetylalanine. Residues 2–34 (ATATPVPPRMGSRAGGPTTPLSPTRLSRLQEKE) are head. Phosphothreonine is present on residues Thr3 and Thr5. Residue Arg14 is modified to Omega-N-methylarginine. The residue at position 20 (Thr20) is a Phosphothreonine. Ser23 carries the post-translational modification Phosphoserine. Thr25 is modified (phosphothreonine). Ser28 carries the post-translational modification Phosphoserine. One can recognise an IF rod domain in the interval 32 to 388 (EKEELRELND…KLLEGEEERL (357 aa)). Residues 35 to 69 (ELRELNDRLAVYIDKVRSLETENSALQLQVTEREE) are coil 1A. The linker 1 stretch occupies residues 70–81 (VRGRELTGLKAL). Residues 82–215 (YETELADARR…EFRKSMYEEE (134 aa)) form a coil 1B region. A Glycyl lysine isopeptide (Lys-Gly) (interchain with G-Cter in SUMO2) cross-link involves residue Lys102. An N6-acetyllysine modification is found at Lys111. A Glycyl lysine isopeptide (Lys-Gly) (interchain with G-Cter in SUMO2) cross-link involves residue Lys123. Ser126 carries the phosphoserine modification. Lys145 is covalently cross-linked (Glycyl lysine isopeptide (Lys-Gly) (interchain with G-Cter in SUMO2)). Position 157 is an N6-acetyllysine; alternate (Lys157). A Glycyl lysine isopeptide (Lys-Gly) (interchain with G-Cter in SUMO2); alternate cross-link involves residue Lys157. Phosphoserine is present on Ser158. Lys181 is covalently cross-linked (Glycyl lysine isopeptide (Lys-Gly) (interchain with G-Cter in SUMO2)). Phosphoserine is present on residues Ser200, Ser210, and Ser232. Positions 216–243 (INETRRKHETRLVEVDSGRQIEYEYKLA) are linker 2. Residues Lys241 and Lys261 each participate in a glycyl lysine isopeptide (Lys-Gly) (interchain with G-Cter in SUMO2) cross-link. The segment at 244 to 386 (QALHEMREQH…YRKLLEGEEE (143 aa)) is coil 2. Residue Lys271 is modified to N6-acetyllysine; alternate. Residue Lys271 forms a Glycyl lysine isopeptide (Lys-Gly) (interchain with G-Cter in SUMO2); alternate linkage. 2 positions are modified to phosphoserine: Ser278 and Ser302. Lys312 is covalently cross-linked (Glycyl lysine isopeptide (Lys-Gly) (interchain with G-Cter in SUMO2)). At Lys330 the chain carries N6-acetyllysine; alternate. Lys330 participates in a covalent cross-link: Glycyl lysine isopeptide (Lys-Gly) (interchain with G-Cter in SUMO2); alternate. Residues Ser375 and Ser393 each carry the phosphoserine modification. Residues 387-586 (RLKLSPSPSS…RASNRSCAIM (200 aa)) form a tail region. The disordered stretch occupies residues 388–432 (LKLSPSPSSRVTVSRASSSRSVRTTRGKRKRVDVEESEASSSVSI). A compositionally biased stretch (low complexity) spans 390–409 (LSPSPSSRVTVSRASSSRSV). O-linked (GlcNAc) threonine glycosylation occurs at Thr399. Residue Arg413 is modified to Omega-N-methylarginine. The Nuclear localization signal signature appears at 415–420 (KRKRVD). The region spanning 430–546 (VSISHSASAT…EEVAQRSTVF (117 aa)) is the LTD domain. Lys483 is modified (N6-acetyllysine). Residue Lys532 forms a Glycyl lysine isopeptide (Lys-Gly) (interchain with G-Cter in SUMO2) linkage. A Phosphoserine modification is found at Ser534. Lys547 is covalently cross-linked (Glycyl lysine isopeptide (Lys-Gly) (interchain with G-Cter in SUMO2)). Thr575 bears the Phosphothreonine mark. Cys583 bears the Cysteine methyl ester mark. Cys583 carries S-farnesyl cysteine lipidation. Positions 584 to 586 (AIM) are cleaved as a propeptide — removed in mature form.

It belongs to the intermediate filament family. As to quaternary structure, homodimer. Lamin dimers then assemble into dimeric head-to-tail polymers. Ultimately, two head-to-tail polymers assemble laterally into a protofilament with a uniformly shaped rod of 3.5 nm in diameter. Interacts with SPAG4 and SEPT12. Post-translationally, B-type lamins undergo a series of modifications, such as farnesylation and phosphorylation. Increased phosphorylation of the lamins occurs before envelope disintegration and probably plays a role in regulating lamin associations. Phosphorylation plays a key role in lamin organization, subcellular localization and nuclear envelope disintegration. Phosphorylation by CDK1 at Ser-23 and Ser-393 at the onset of mitosis drives lamin disassembly and nuclear envelope breakdown.

Its subcellular location is the nucleus lamina. Lamins are intermediate filament proteins that assemble into a filamentous meshwork, and which constitute the major components of the nuclear lamina, a fibrous layer on the nucleoplasmic side of the inner nuclear membrane. Lamins provide a framework for the nuclear envelope, bridging the nuclear envelope and chromatin, thereby playing an important role in nuclear assembly, chromatin organization, nuclear membrane and telomere dynamics. The structural integrity of the lamina is strictly controlled by the cell cycle, as seen by the disintegration and formation of the nuclear envelope in prophase and telophase, respectively. The polypeptide is Lamin-B1 (LMNB1) (Homo sapiens (Human)).